We begin with the raw amino-acid sequence, 287 residues long: Thioredoxin-related transmembrane protein 2 (287 aa).

The signal sequence occupies residues 1–13 (MAVLAPLLAVLYA). Residues 14 to 112 (APGLLRWVSQ…ILFFRLDLRM (99 aa)) lie on the Extracellular side of the membrane. Residues 113–133 (GLLYITLCIVFLMTCKPPLYL) traverse the membrane as a helical segment. At 134 to 287 (GPEHIKYFSD…NEWNDGKKDQ (154 aa)) the chain is on the cytoplasmic side. Residues 137 to 209 (HIKYFSDKTL…PEVSCRYSIS (73 aa)) form the Thioredoxin domain. Residues 284–287 (KKDQ) carry the Di-lysine motif motif.

In terms of assembly, monomer. Homodimer; disulfide-linked. Occurs in both reduced and oxidized monomeric form. Oxidative conditions increase homodimerization.

The protein resides in the endoplasmic reticulum membrane. Its subcellular location is the mitochondrion membrane. Functionally, endoplasmic reticulum and mitochondria-associated protein that probably functions as a regulator of cellular redox state and thereby regulates protein post-translational modification, protein folding and mitochondrial activity. The polypeptide is Thioredoxin-related transmembrane protein 2 (tmx2) (Xenopus laevis (African clawed frog)).